Reading from the N-terminus, the 443-residue chain is Xaa-Pro dipeptidase (443 aa).

5 residues coordinate Mn(2+): D244, D255, H339, E384, and E423.

It belongs to the peptidase M24B family. Bacterial-type prolidase subfamily. Mn(2+) is required as a cofactor.

It catalyses the reaction Xaa-L-Pro dipeptide + H2O = an L-alpha-amino acid + L-proline. Functionally, splits dipeptides with a prolyl residue in the C-terminal position. The chain is Xaa-Pro dipeptidase from Pseudoalteromonas atlantica (strain T6c / ATCC BAA-1087).